A 933-amino-acid polypeptide reads, in one-letter code: Phosphoenolpyruvate carboxylase (933 aa).

Active-site residues include H164 and K595.

Belongs to the PEPCase type 1 family. The cofactor is Mg(2+).

The enzyme catalyses oxaloacetate + phosphate = phosphoenolpyruvate + hydrogencarbonate. In terms of biological role, forms oxaloacetate, a four-carbon dicarboxylic acid source for the tricarboxylic acid cycle. The polypeptide is Phosphoenolpyruvate carboxylase (Rhodopseudomonas palustris (strain HaA2)).